The chain runs to 639 residues: mRNA export factor (639 aa).

Disordered stretches follow at residues 1–45 (MQAE…SLES), 63–287 (LLGD…KWGA), and 322–355 (CTAR…SQPR). The span at 142–152 (PRRRTHARSRS) shows a compositional bias: basic residues. Low complexity predominate over residues 153–169 (PRAGSTSSQQPPSSSGG). Residues 175-189 (VRREAGDRETSEKPA) are compositionally biased toward basic and acidic residues. The span at 203 to 215 (HQCQSPPAQTASQ) shows a compositional bias: polar residues. Basic and acidic residues-rich tracts occupy residues 234–247 (RTPH…HEGA) and 326–348 (DPAR…ERRT). Positions 525, 606, 610, and 615 each coordinate Zn(2+). The CHC2-type zinc finger occupies 525–615 (CHLAASKSPL…HANVCRKEEC (91 aa)).

This sequence belongs to the HHV-1 ICP27 protein family.

It localises to the host cytoplasm. The protein localises to the host nucleus. Multifunctional regulator of the expression of viral genes that mediates nuclear export of viral intronless mRNAs. This immediate early (EI) protein promotes the nuclear export of viral intronless mRNAs. This Amazona oratrix (yellow-headed parrot) protein is mRNA export factor.